Consider the following 362-residue polypeptide: Holliday junction branch migration complex subunit RuvB (362 aa).

Residues 1–20 are disordered; the sequence is MKRTIMTNTDTFEQPNTGAN. The tract at residues 15–203 is large ATPase domain (RuvB-L); sequence PNTGANEESL…FGFTAHLDFY (189 aa). ATP-binding positions include Leu42, Arg43, Gly84, Lys87, Thr88, Thr89, 150-152, Arg193, Tyr203, and Arg240; that span reads EDF. Thr88 provides a ligand contact to Mg(2+). Positions 204 to 274 are small ATPAse domain (RuvB-S); that stretch reads PHEELEKLIE…DVKEALALYQ (71 aa). The head domain (RuvB-H) stretch occupies residues 277-362; that stretch reads TEGLDRLDIA…ESAYDVNEMS (86 aa). Residues Arg332 and Arg337 each coordinate DNA.

It belongs to the RuvB family. As to quaternary structure, homohexamer. Forms an RuvA(8)-RuvB(12)-Holliday junction (HJ) complex. HJ DNA is sandwiched between 2 RuvA tetramers; dsDNA enters through RuvA and exits via RuvB. An RuvB hexamer assembles on each DNA strand where it exits the tetramer. Each RuvB hexamer is contacted by two RuvA subunits (via domain III) on 2 adjacent RuvB subunits; this complex drives branch migration. In the full resolvosome a probable DNA-RuvA(4)-RuvB(12)-RuvC(2) complex forms which resolves the HJ.

The protein localises to the cytoplasm. The enzyme catalyses ATP + H2O = ADP + phosphate + H(+). In terms of biological role, the RuvA-RuvB-RuvC complex processes Holliday junction (HJ) DNA during genetic recombination and DNA repair, while the RuvA-RuvB complex plays an important role in the rescue of blocked DNA replication forks via replication fork reversal (RFR). RuvA specifically binds to HJ cruciform DNA, conferring on it an open structure. The RuvB hexamer acts as an ATP-dependent pump, pulling dsDNA into and through the RuvAB complex. RuvB forms 2 homohexamers on either side of HJ DNA bound by 1 or 2 RuvA tetramers; 4 subunits per hexamer contact DNA at a time. Coordinated motions by a converter formed by DNA-disengaged RuvB subunits stimulates ATP hydrolysis and nucleotide exchange. Immobilization of the converter enables RuvB to convert the ATP-contained energy into a lever motion, pulling 2 nucleotides of DNA out of the RuvA tetramer per ATP hydrolyzed, thus driving DNA branch migration. The RuvB motors rotate together with the DNA substrate, which together with the progressing nucleotide cycle form the mechanistic basis for DNA recombination by continuous HJ branch migration. Branch migration allows RuvC to scan DNA until it finds its consensus sequence, where it cleaves and resolves cruciform DNA. This Bifidobacterium adolescentis (strain ATCC 15703 / DSM 20083 / NCTC 11814 / E194a) protein is Holliday junction branch migration complex subunit RuvB.